The primary structure comprises 184 residues: NADH-quinone oxidoreductase subunit B (184 aa).

[4Fe-4S] cluster-binding residues include Cys-37, Cys-38, Cys-103, and Cys-132.

This sequence belongs to the complex I 20 kDa subunit family. As to quaternary structure, NDH-1 is composed of 14 different subunits. Subunits NuoB, C, D, E, F, and G constitute the peripheral sector of the complex. [4Fe-4S] cluster serves as cofactor.

Its subcellular location is the cell membrane. It catalyses the reaction a quinone + NADH + 5 H(+)(in) = a quinol + NAD(+) + 4 H(+)(out). In terms of biological role, NDH-1 shuttles electrons from NADH, via FMN and iron-sulfur (Fe-S) centers, to quinones in the respiratory chain. The immediate electron acceptor for the enzyme in this species is believed to be a menaquinone. Couples the redox reaction to proton translocation (for every two electrons transferred, four hydrogen ions are translocated across the cytoplasmic membrane), and thus conserves the redox energy in a proton gradient. The protein is NADH-quinone oxidoreductase subunit B of Mycobacteroides abscessus (strain ATCC 19977 / DSM 44196 / CCUG 20993 / CIP 104536 / JCM 13569 / NCTC 13031 / TMC 1543 / L948) (Mycobacterium abscessus).